Reading from the N-terminus, the 402-residue chain is S-adenosylmethionine synthase (402 aa).

137–142 (GQGSAD) serves as a coordination point for ATP.

This sequence belongs to the AdoMet synthase 2 family. Mg(2+) is required as a cofactor.

The catalysed reaction is L-methionine + ATP + H2O = S-adenosyl-L-methionine + phosphate + diphosphate. Its pathway is amino-acid biosynthesis; S-adenosyl-L-methionine biosynthesis; S-adenosyl-L-methionine from L-methionine: step 1/1. In terms of biological role, catalyzes the formation of S-adenosylmethionine from methionine and ATP. The chain is S-adenosylmethionine synthase from Pyrobaculum aerophilum (strain ATCC 51768 / DSM 7523 / JCM 9630 / CIP 104966 / NBRC 100827 / IM2).